We begin with the raw amino-acid sequence, 167 residues long: MAKFEAPQKDDLQEKLVAVNRVSKVVKGGRIFSFTALTVVGDGNGKVGYGYGKAREVPAAIQKAMEKARRNIVSVELVNGTLHHPVKGRHTGSRVYMQPASEGTGIIAGGAMRAVLEVAGVHNVLSKAYGSTNPINIVRATVDALVHMKSPAQIAAKRGLNVDEIRG.

The 64-residue stretch at 12–75 folds into the S5 DRBM domain; the sequence is LQEKLVAVNR…EKARRNIVSV (64 aa).

Belongs to the universal ribosomal protein uS5 family. As to quaternary structure, part of the 30S ribosomal subunit. Contacts proteins S4 and S8.

With S4 and S12 plays an important role in translational accuracy. Functionally, located at the back of the 30S subunit body where it stabilizes the conformation of the head with respect to the body. The protein is Small ribosomal subunit protein uS5 of Shewanella loihica (strain ATCC BAA-1088 / PV-4).